A 354-amino-acid polypeptide reads, in one-letter code: Guanine nucleotide-binding protein G(o) subunit alpha (354 aa).

G2 carries the N-myristoyl glycine lipid modification. C3 is lipidated: S-palmitoyl cysteine. The region spanning 32–354 (KDVKLLLLGA…AYNLRGCGLY (323 aa)) is the G-alpha domain. The tract at residues 35-48 (KLLLLGAGESGKST) is G1 motif. Residues E43, K46, S47, T48, S152, L176, R177, T178, and R179 each contribute to the GTP site. Position 47 (S47) interacts with Mg(2+). The segment at 174–182 (DILRTRVKT) is G2 motif. T182 contributes to the Mg(2+) binding site. The segment at 197–206 (FRLFDVGGQR) is G3 motif. Residues 266–273 (ILFLNKKD) form a G4 motif region. Residues N270, D273, and C325 each contribute to the GTP site. The interval 324-329 (TCATDT) is G5 motif.

This sequence belongs to the G-alpha family. G(i/o/t/z) subfamily. As to quaternary structure, g proteins are composed of 3 units; alpha, beta and gamma.

It carries out the reaction GTP + H2O = GDP + phosphate + H(+). Its function is as follows. Guanine nucleotide-binding proteins (G proteins) function as transducers downstream of G protein-coupled receptors (GPCRs) in numerous signaling cascades. The alpha chain contains the guanine nucleotide binding site and alternates between an active, GTP-bound state and an inactive, GDP-bound state. Signaling by an activated GPCR promotes GDP release and GTP binding. The alpha subunit has a low GTPase activity that converts bound GTP to GDP, thereby terminating the signal. Both GDP release and GTP hydrolysis are modulated by numerous regulatory proteins. Signaling is mediated via effector proteins, such as adenylate cyclase. Inhibits adenylate cyclase activity, leading to decreased intracellular cAMP levels. This Xenopus laevis (African clawed frog) protein is Guanine nucleotide-binding protein G(o) subunit alpha (gna0).